A 110-amino-acid chain; its full sequence is Membrane-associated protein slr1513 (110 aa).

The protein resides in the cellular thylakoid membrane. The protein localises to the cell membrane. In Synechocystis sp. (strain ATCC 27184 / PCC 6803 / Kazusa), this protein is Membrane-associated protein slr1513.